Here is a 103-residue protein sequence, read N- to C-terminus: MRLRKGDTVQVIAGKDKGKTGEVLRTLPNENRVIVEGLNMRTRHVKPTQEGETGRIVTEEASLHASNVMFYSTAKKVASRIELITEKDGSKKRRLKKTGEVID.

The protein belongs to the universal ribosomal protein uL24 family. As to quaternary structure, part of the 50S ribosomal subunit.

Functionally, one of two assembly initiator proteins, it binds directly to the 5'-end of the 23S rRNA, where it nucleates assembly of the 50S subunit. In terms of biological role, one of the proteins that surrounds the polypeptide exit tunnel on the outside of the subunit. In Synechococcus sp. (strain CC9311), this protein is Large ribosomal subunit protein uL24.